We begin with the raw amino-acid sequence, 223 residues long: Urease accessory protein UreF (223 aa).

This sequence belongs to the UreF family. As to quaternary structure, ureD, UreF and UreG form a complex that acts as a GTP-hydrolysis-dependent molecular chaperone, activating the urease apoprotein by helping to assemble the nickel containing metallocenter of UreC. The UreE protein probably delivers the nickel.

The protein localises to the cytoplasm. Functionally, required for maturation of urease via the functional incorporation of the urease nickel metallocenter. This is Urease accessory protein UreF from Rhizobium etli (strain CIAT 652).